A 170-amino-acid polypeptide reads, in one-letter code: MKTQRDGHSLGRWSLVLLLLGLVMPLAIVAQVLSYKEAVLRAIDGINQRSSDANLYRLLDLDPRPTMDGDPDTPKPVSFTVKETVCPRTTQQSPEDCDFKKDGLVKRCMGTVTLNQARGSFDISCDKDNKRFALLGDFFRKSKEKIGKEFKRIVQRIKDFLRNLVPRTES.

The first 30 residues, 1 to 30 (MKTQRDGHSLGRWSLVLLLLGLVMPLAIVA), serve as a signal peptide directing secretion. Residues 31-131 (QVLSYKEAVL…DISCDKDNKR (101 aa)) constitute a propeptide, cathelin-like domain (CLD). Intrachain disulfides connect C86–C97 and C108–C125. The tract at residues 150 to 162 (FKRIVQRIKDFLR) is active core.

It belongs to the cathelicidin family. In terms of assembly, monomer, homodimer or homotrimer (in vitro). Oligomerizes as tetra- or hexamer in solution (in vitro). In terms of processing, proteolytically cleaved by proteinase PRTN3 into antibacterial peptide LL-37. Proteolytically cleaved by cathepsin CTSG and neutrophil elastase ELANE. Post-translationally, resistant to proteolytic degradation in solution, and when bound to both zwitterionic (mimicking mammalian membranes) and negatively charged membranes (mimicking bacterial membranes). After secretion onto the skin surface, the CAMP gene product is processed by a serine protease-dependent mechanism into multiple novel antimicrobial peptides distinct from and shorter than cathelicidin LL-37. These peptides show enhanced antimicrobial action, acquiring the ability to kill skin pathogens such as S.aureus, E.coli and C.albicans. These peptides have lost the ability to stimulate CXCL8/IL8 release from keratinocytes. The peptides act synergistically, killing bacteria at lower concentrations when present together, and maintain activity at increased salt condition.

The protein localises to the secreted. Its subcellular location is the vesicle. In terms of biological role, antimicrobial protein that is an integral component of the innate immune system. Binds to bacterial lipopolysaccharides (LPS). Acts via neutrophil N-formyl peptide receptors to enhance the release of CXCL2. Postsecretory processing generates multiple cathelicidin antimicrobial peptides with various lengths which act as a topical antimicrobial defense in sweat on skin. The unprocessed precursor form, cathelicidin antimicrobial peptide, inhibits the growth of Gram-negative E.coli and E.aerogenes with efficiencies comparable to that of the mature peptide LL-37 (in vitro). Antimicrobial peptide that is an integral component of the innate immune system. Binds to bacterial lipopolysaccharides (LPS). Causes membrane permeabilization by forming transmembrane pores (in vitro). Causes lysis of E.coli. Exhibits antimicrobial activity against Gram-negative bacteria such as P.aeruginosa, S.typhimurium, E.aerogenes, E.coli and P.syringae, Gram-positive bacteria such as L.monocytogenes, S.epidermidis, S.pyogenes and S.aureus, as well as vancomycin-resistant enterococci (in vitro). Exhibits antimicrobial activity against methicillin-resistant S.aureus, P.mirabilis, and C.albicans in low-salt media, but not in media containing 100 mM NaCl (in vitro). Forms chiral supramolecular assemblies with quinolone signal (PQS) molecules of P.aeruginosa, which may lead to interference of bacterial quorum signaling and perturbance of bacterial biofilm formation. May form supramolecular fiber-like assemblies on bacterial membranes. Induces cytokine and chemokine producation as well as TNF/TNFA and CSF2/GMCSF production in normal human keratinocytes. Exhibits hemolytic activity against red blood cells. Its function is as follows. Exhibits antimicrobial activity against E.coli and B.megaterium (in vitro). The polypeptide is Cathelicidin antimicrobial peptide (Pan troglodytes (Chimpanzee)).